The primary structure comprises 203 residues: Small ribosomal subunit protein uS4 (203 aa).

Positions 93–158 constitute an S4 RNA-binding domain; sequence LRLDNVVYRL…QQLVTRFLDL (66 aa).

This sequence belongs to the universal ribosomal protein uS4 family. As to quaternary structure, part of the 30S ribosomal subunit. Contacts protein S5. The interaction surface between S4 and S5 is involved in control of translational fidelity.

In terms of biological role, one of the primary rRNA binding proteins, it binds directly to 16S rRNA where it nucleates assembly of the body of the 30S subunit. With S5 and S12 plays an important role in translational accuracy. The protein is Small ribosomal subunit protein uS4 of Akkermansia muciniphila (strain ATCC BAA-835 / DSM 22959 / JCM 33894 / BCRC 81048 / CCUG 64013 / CIP 107961 / Muc).